The following is a 685-amino-acid chain: Probable glucan endo-1,3-beta-glucosidase btgC (685 aa).

3 disordered regions span residues 1-96 (MSGP…NLGP), 119-168 (GIDA…RDSY), and 180-202 (PAGQ…SPYQ). The Cytoplasmic portion of the chain corresponds to 1-312 (MSGPHRSFSF…PTPGGGSRKR (312 aa)). Composition is skewed to polar residues over residues 47-61 (SARS…SSGF) and 73-90 (GQNS…TTPG). Residues 313 to 333 (GWIVGLALAFIVVGAIVGGAV) traverse the membrane as a helical; Signal-anchor for type II membrane protein segment. The Extracellular portion of the chain corresponds to 334–685 (GGTLGNRENE…IPDCGGKTAA (352 aa)). The interval 335 to 369 (GTLGNRENEAPDTTKSASSDTESNGDLNKDSSEIK) is disordered. A compositionally biased stretch (polar residues) spans 345–360 (PDTTKSASSDTESNGD). Residues Asn405, Asn428, and Asn456 are each glycosylated (N-linked (GlcNAc...) asparagine). Glu488 (proton donor) is an active-site residue. The active-site Nucleophile is the Glu587. The N-linked (GlcNAc...) asparagine glycan is linked to Asn632.

This sequence belongs to the glycosyl hydrolase 17 family.

It localises to the cell membrane. It carries out the reaction Hydrolysis of (1-&gt;3)-beta-D-glucosidic linkages in (1-&gt;3)-beta-D-glucans.. Glucanases play a role in cell expansion during growth, in cell-cell fusion during mating, and in spore release during sporulation. This enzyme may be involved in beta-glucan degradation. Active on laminarin and lichenan. The sequence is that of Probable glucan endo-1,3-beta-glucosidase btgC (btgC) from Aspergillus oryzae (strain ATCC 42149 / RIB 40) (Yellow koji mold).